The primary structure comprises 539 residues: Serine/threonine-protein kinase BUR1 (539 aa).

The span at 1–15 (MEKLSETTPNGTSPR) shows a compositional bias: polar residues. Positions 1–27 (MEKLSETTPNGTSPRTFALNHSRPRSS) are disordered. The Protein kinase domain occupies 37-339 (YELLGKLGEG…AVDALQHPWF (303 aa)). ATP is bound by residues 43 to 51 (LGEGTFGEV) and Lys66. The Proton acceptor role is filled by Asp169. The tract at residues 370–539 (AALPPAPKGG…DRPDHNGYRR (170 aa)) is disordered. 3 stretches are compositionally biased toward basic and acidic residues: residues 414–428 (NGPDDRRPAWQRERG), 471–514 (NRDD…DRGT), and 521–539 (PRHDRSRDRDRPDHNGYRR).

It belongs to the protein kinase superfamily. CMGC Ser/Thr protein kinase family. CDC2/CDKX subfamily.

The protein resides in the nucleus. It catalyses the reaction L-seryl-[protein] + ATP = O-phospho-L-seryl-[protein] + ADP + H(+). The enzyme catalyses L-threonyl-[protein] + ATP = O-phospho-L-threonyl-[protein] + ADP + H(+). The catalysed reaction is [DNA-directed RNA polymerase] + ATP = phospho-[DNA-directed RNA polymerase] + ADP + H(+). In terms of biological role, serine/threonine-protein kinase involved in transcription regulation. Phosphorylates the UBC2/RAD6 ubiquitin-conjugating enzyme (E2), leading to monoubiquitination of histone H2B and the silencing of telomeric-associated genes. Also required for histone H3 methylation. Necessary for the recovery from pheromone-induced growth arrest in the cell cycle G1 phase. The protein is Serine/threonine-protein kinase BUR1 (BUR1) of Gibberella zeae (strain ATCC MYA-4620 / CBS 123657 / FGSC 9075 / NRRL 31084 / PH-1) (Wheat head blight fungus).